The following is a 272-amino-acid chain: NADPH-dependent 7-cyano-7-deazaguanine reductase (272 aa).

82–84 (IES) is a substrate binding site. 84 to 85 (SK) is an NADPH binding site. The Thioimide intermediate role is filled by Cys178. Residue Asp185 is the Proton donor of the active site. 217–218 (HE) is a binding site for substrate. 246–247 (RG) lines the NADPH pocket.

It belongs to the GTP cyclohydrolase I family. QueF type 2 subfamily. In terms of assembly, homodimer.

It localises to the cytoplasm. The catalysed reaction is 7-aminomethyl-7-carbaguanine + 2 NADP(+) = 7-cyano-7-deazaguanine + 2 NADPH + 3 H(+). It participates in tRNA modification; tRNA-queuosine biosynthesis. Catalyzes the NADPH-dependent reduction of 7-cyano-7-deazaguanine (preQ0) to 7-aminomethyl-7-deazaguanine (preQ1). This chain is NADPH-dependent 7-cyano-7-deazaguanine reductase, found in Stenotrophomonas maltophilia (strain K279a).